Consider the following 267-residue polypeptide: 4-hydroxy-tetrahydrodipicolinate reductase (267 aa).

10-15 is a binding site for NAD(+); it reads GAGGKM. Position 38 (arginine 38) interacts with NADP(+). NAD(+) contacts are provided by residues 100 to 102 and 126 to 129; these read GTT and APNF. Histidine 156 serves as the catalytic Proton donor/acceptor. Histidine 157 provides a ligand contact to (S)-2,3,4,5-tetrahydrodipicolinate. Catalysis depends on lysine 160, which acts as the Proton donor. 166-167 provides a ligand contact to (S)-2,3,4,5-tetrahydrodipicolinate; sequence GT.

Belongs to the DapB family.

It localises to the cytoplasm. The enzyme catalyses (S)-2,3,4,5-tetrahydrodipicolinate + NAD(+) + H2O = (2S,4S)-4-hydroxy-2,3,4,5-tetrahydrodipicolinate + NADH + H(+). The catalysed reaction is (S)-2,3,4,5-tetrahydrodipicolinate + NADP(+) + H2O = (2S,4S)-4-hydroxy-2,3,4,5-tetrahydrodipicolinate + NADPH + H(+). Its pathway is amino-acid biosynthesis; L-lysine biosynthesis via DAP pathway; (S)-tetrahydrodipicolinate from L-aspartate: step 4/4. In terms of biological role, catalyzes the conversion of 4-hydroxy-tetrahydrodipicolinate (HTPA) to tetrahydrodipicolinate. The protein is 4-hydroxy-tetrahydrodipicolinate reductase of Desulfitobacterium hafniense (strain DSM 10664 / DCB-2).